Reading from the N-terminus, the 261-residue chain is Transmembrane protein 106A (261 aa).

Over residues 1 to 10 (MGKAFSQLTS) the composition is skewed to polar residues. Residues 1–22 (MGKAFSQLTSQKDEDKSILPDN) are disordered. A helical transmembrane segment spans residues 93-113 (LSVFLAVTICLLIFSLTIFFL).

Belongs to the TMEM106 family.

It localises to the cell membrane. In terms of biological role, activates macrophages and polarizes them into M1-like macrophages through the activation of the MAPK and NF-kappaB signaling pathway. Upon activation, up-regulates the expression of CD80, CD86, CD69 and MHC II on macrophages, and induces the release of pro-inflammatory cytokines such as TNF, IL1B, IL6, CCL2 and nitric oxide. May play a role in inhibition of proliferation and migration. This Rattus norvegicus (Rat) protein is Transmembrane protein 106A (Tmem106a).